The chain runs to 198 residues: Syndecan-4 (198 aa).

The first 23 residues, 1 to 23 (MAPACLLAPLLLLLLGGFPLVPG), serve as a signal peptide directing secretion. Topologically, residues 24–145 (ESIRETEVID…QGSNIFERTE (122 aa)) are extracellular. 2 disordered regions span residues 42-76 (YFSG…PRPF) and 94-130 (AQPG…NKVS). Residues serine 44, serine 62, and serine 64 are each glycosylated (O-linked (Xyl...) (glycosaminoglycan) serine). Residues 48–71 (PDDEDAGGSDDFELSGSGDLDDTE) show a composition bias toward acidic residues. A compositionally biased stretch (basic and acidic residues) spans 102-118 (SEPKELEENEVIPKRAP). The chain crosses the membrane as a helical span at residues 146–170 (VLAALIVGGVVGILFAVFLILLLVY). The Cytoplasmic portion of the chain corresponds to 171 to 198 (RMKKKDEGSYDLGKKPIYKKAPTNEFYA).

It belongs to the syndecan proteoglycan family. In terms of assembly, homodimer. Interacts with CDCP1 and SDCBP. Interacts (via its cytoplasmic domain) with GIPC (via its PDZ domain). Interacts (via its cytoplasmic domain) with NUDT16L1. Interacts with DNM2; this interaction is markedly enhanced at focal ahesion site upon induction of focal adhesions and stress-fiber formation. Shedding is enhanced by a number of factors such as heparanase, thrombin or EGF. Also by stress and wound healing. PMA-mediated shedding is inhibited by TIMP3. In terms of processing, O-glycosylated; contains both chondroitin sulfate and heparan sulfate. Ser-44, Ser-62 and Ser-64 can all be modified by either chondroitin sulfate or heparan sulfate, and the protein exists in forms that contain only chondroitin sulfate, only heparan sulfate and both chondroitin sulfate and heparan sulfate. In terms of tissue distribution, ubiquitous. Highest levels in liver, kidney and lung.

It is found in the membrane. The protein resides in the secreted. In terms of biological role, cell surface proteoglycan which regulates exosome biogenesis in concert with SDCBP and PDCD6IP. The polypeptide is Syndecan-4 (Mus musculus (Mouse)).